We begin with the raw amino-acid sequence, 514 residues long: 2,3-bisphosphoglycerate-independent phosphoglycerate mutase (514 aa).

Mn(2+) contacts are provided by Asp-14 and Ser-64. The active-site Phosphoserine intermediate is Ser-64. Substrate-binding positions include His-125, 155–156, Arg-187, Arg-193, 263–266, and Lys-336; these read RD and RADR. Mn(2+) contacts are provided by Asp-403, His-407, Asp-444, His-445, and His-463.

It belongs to the BPG-independent phosphoglycerate mutase family. In terms of assembly, monomer. The cofactor is Mn(2+).

The enzyme catalyses (2R)-2-phosphoglycerate = (2R)-3-phosphoglycerate. The protein operates within carbohydrate degradation; glycolysis; pyruvate from D-glyceraldehyde 3-phosphate: step 3/5. Its function is as follows. Catalyzes the interconversion of 2-phosphoglycerate and 3-phosphoglycerate. The polypeptide is 2,3-bisphosphoglycerate-independent phosphoglycerate mutase (Shewanella sp. (strain MR-4)).